A 259-amino-acid polypeptide reads, in one-letter code: Small ribosomal subunit protein uS7m (259 aa).

Residues Met-1–Ser-39 constitute a mitochondrion transit peptide. Thr-157 carries the phosphothreonine modification.

It belongs to the universal ribosomal protein uS7 family. In terms of assembly, component of the mitochondrial small ribosomal subunit (mt-SSU). Mature yeast 74S mitochondrial ribosomes consist of a small (37S) and a large (54S) subunit. The 37S small subunit contains a 15S ribosomal RNA (15S mt-rRNA) and at least 32 different proteins. The 54S large subunit contains a 21S rRNA (21S mt-rRNA) and at least 45 different proteins.

The protein resides in the mitochondrion. Functionally, component of the mitochondrial ribosome (mitoribosome), a dedicated translation machinery responsible for the synthesis of mitochondrial genome-encoded proteins, including at least some of the essential transmembrane subunits of the mitochondrial respiratory chain. The mitoribosomes are attached to the mitochondrial inner membrane and translation products are cotranslationally integrated into the membrane. This is Small ribosomal subunit protein uS7m (rsm7) from Schizosaccharomyces pombe (strain 972 / ATCC 24843) (Fission yeast).